Here is a 403-residue protein sequence, read N- to C-terminus: 4-hydroxy-3-methylbut-2-enyl diphosphate reductase (403 aa).

Cys66 provides a ligand contact to [4Fe-4S] cluster. (2E)-4-hydroxy-3-methylbut-2-enyl diphosphate is bound at residue His96. Residue His96 participates in dimethylallyl diphosphate binding. Position 96 (His96) interacts with isopentenyl diphosphate. Cys157 serves as a coordination point for [4Fe-4S] cluster. His185 contacts (2E)-4-hydroxy-3-methylbut-2-enyl diphosphate. Residue His185 coordinates dimethylallyl diphosphate. Residue His185 coordinates isopentenyl diphosphate. Glu187 serves as the catalytic Proton donor. Thr250 lines the (2E)-4-hydroxy-3-methylbut-2-enyl diphosphate pocket. Cys288 serves as a coordination point for [4Fe-4S] cluster. Ser317, Ser318, Asn319, and Ser379 together coordinate (2E)-4-hydroxy-3-methylbut-2-enyl diphosphate. Dimethylallyl diphosphate-binding residues include Ser317, Ser318, Asn319, and Ser379. 4 residues coordinate isopentenyl diphosphate: Ser317, Ser318, Asn319, and Ser379.

The protein belongs to the IspH family. Requires [4Fe-4S] cluster as cofactor.

The enzyme catalyses isopentenyl diphosphate + 2 oxidized [2Fe-2S]-[ferredoxin] + H2O = (2E)-4-hydroxy-3-methylbut-2-enyl diphosphate + 2 reduced [2Fe-2S]-[ferredoxin] + 2 H(+). It catalyses the reaction dimethylallyl diphosphate + 2 oxidized [2Fe-2S]-[ferredoxin] + H2O = (2E)-4-hydroxy-3-methylbut-2-enyl diphosphate + 2 reduced [2Fe-2S]-[ferredoxin] + 2 H(+). The protein operates within isoprenoid biosynthesis; dimethylallyl diphosphate biosynthesis; dimethylallyl diphosphate from (2E)-4-hydroxy-3-methylbutenyl diphosphate: step 1/1. It functions in the pathway isoprenoid biosynthesis; isopentenyl diphosphate biosynthesis via DXP pathway; isopentenyl diphosphate from 1-deoxy-D-xylulose 5-phosphate: step 6/6. Its function is as follows. Catalyzes the conversion of 1-hydroxy-2-methyl-2-(E)-butenyl 4-diphosphate (HMBPP) into a mixture of isopentenyl diphosphate (IPP) and dimethylallyl diphosphate (DMAPP). Acts in the terminal step of the DOXP/MEP pathway for isoprenoid precursor biosynthesis. This Rippkaea orientalis (strain PCC 8801 / RF-1) (Cyanothece sp. (strain PCC 8801)) protein is 4-hydroxy-3-methylbut-2-enyl diphosphate reductase.